A 449-amino-acid chain; its full sequence is Aminopeptidase C (449 aa).

Active-site residues include Cys70, His364, and Asn385.

It belongs to the peptidase C1 family. As to quaternary structure, homohexamer.

The protein resides in the cytoplasm. It catalyses the reaction Inactivates bleomycin B2 (a cytotoxic glycometallopeptide) by hydrolysis of a carboxyamide bond of beta-aminoalanine, but also shows general aminopeptidase activity. The specificity varies somewhat with source, but amino acid arylamides of Met, Leu and Ala are preferred.. The chain is Aminopeptidase C (pepC) from Lactobacillus helveticus (Lactobacillus suntoryeus).